The following is a 152-amino-acid chain: SsrA-binding protein (152 aa).

The protein belongs to the SmpB family.

Its subcellular location is the cytoplasm. Its function is as follows. Required for rescue of stalled ribosomes mediated by trans-translation. Binds to transfer-messenger RNA (tmRNA), required for stable association of tmRNA with ribosomes. tmRNA and SmpB together mimic tRNA shape, replacing the anticodon stem-loop with SmpB. tmRNA is encoded by the ssrA gene; the 2 termini fold to resemble tRNA(Ala) and it encodes a 'tag peptide', a short internal open reading frame. During trans-translation Ala-aminoacylated tmRNA acts like a tRNA, entering the A-site of stalled ribosomes, displacing the stalled mRNA. The ribosome then switches to translate the ORF on the tmRNA; the nascent peptide is terminated with the 'tag peptide' encoded by the tmRNA and targeted for degradation. The ribosome is freed to recommence translation, which seems to be the essential function of trans-translation. The protein is SsrA-binding protein of Helicobacter pylori (strain J99 / ATCC 700824) (Campylobacter pylori J99).